The primary structure comprises 340 residues: MTTVLVTGGAGFIATHTDIELLNKGYDVISVDNYGNSSPVALERVEQITGKPVKRYDGDVRDEALMERVFAENNIDWVIHFAGLKAVGESVAKPIEYYDNNLYSTLVLLKVMKKHNVKKIIFSSSATVYGTPKELPITEETPTGGTTNPYGTSKLFQEQILRDVHVADPSWTIVLLRYFNPVGAHESGLLGEDPKGIPANLTPYVAKVAVGELKEVQVYGDDYDTPDGTGVRDYIHVVDLAKGHVAVIDHIDKEGVFVYNLGTGHGYSVLEVIKAYEKAAGHPIPYAIKPRRPGDIAACYADASKAEKELGWKAELTIDDMAASSLNWQTKNPNGFRDAE.

NAD(+) is bound by residues 12–13 (FI), 32–37 (DNYGNS), 59–60 (DV), 81–85 (FAGLK), N100, S125, Y150, K154, and F179. The substrate site is built by S125 and Y150. Y150 acts as the Proton acceptor in catalysis. Residues N180, 200–201 (NL), 217–219 (QVY), R232, and 292–295 (RPGD) contribute to the substrate site.

It belongs to the NAD(P)-dependent epimerase/dehydratase family. In terms of assembly, homodimer. Requires NAD(+) as cofactor.

The catalysed reaction is UDP-alpha-D-glucose = UDP-alpha-D-galactose. The protein operates within carbohydrate metabolism; galactose metabolism. In terms of biological role, involved in the metabolism of galactose. Catalyzes the conversion of UDP-galactose (UDP-Gal) to UDP-glucose (UDP-Glc) through a mechanism involving the transient reduction of NAD. Can also epimerize UDP-GalNAc to UDP-GlcNAc. Involved in the lacto-N-biose I/galacto-N-biose (LNB/GNB) degradation pathway, which is important for host intestinal colonization by bifidobacteria. In Bifidobacterium longum subsp. longum (strain ATCC 15707 / DSM 20219 / JCM 1217 / NCTC 11818 / E194b), this protein is UDP-glucose 4-epimerase (lnpD).